Here is a 134-residue protein sequence, read N- to C-terminus: Acyl carrier protein, mitochondrial (134 aa).

The N-terminal 46 residues, Met1 to Tyr46, are a transit peptide targeting the mitochondrion. The Carrier domain maps to Asp55–Pro131. Ser91 carries the O-(pantetheine 4'-phosphoryl)serine modification.

Belongs to the acyl carrier protein (ACP) family. In terms of assembly, complex I is composed of about 30 different subunits. Post-translationally, 4'-phosphopantetheine is transferred from CoA to a specific serine of apo-ACP by acpS. This modification is essential for activity because fatty acids are bound in thioester linkage to the sulfhydryl of the prosthetic group.

The protein resides in the mitochondrion. It participates in lipid metabolism; fatty acid biosynthesis. Functionally, carrier of the growing fatty acid chain in fatty acid biosynthesis. May be involved in the synthesis of very-long-chain fatty acids. Accessory and non-catalytic subunit of the mitochondrial membrane respiratory chain NADH dehydrogenase (Complex I), which functions in the transfer of electrons from NADH to the respiratory chain. In Neurospora crassa (strain ATCC 24698 / 74-OR23-1A / CBS 708.71 / DSM 1257 / FGSC 987), this protein is Acyl carrier protein, mitochondrial (nuo-12).